The chain runs to 143 residues: ATP synthase subunit b' (143 aa).

The helical transmembrane segment at 6 to 26 (ATLPVMALQFILLAVILNAVF) threads the bilayer.

The protein belongs to the ATPase B chain family. In terms of assembly, F-type ATPases have 2 components, F(1) - the catalytic core - and F(0) - the membrane proton channel. F(1) has five subunits: alpha(3), beta(3), gamma(1), delta(1), epsilon(1). F(0) has four main subunits: a(1), b(1), b'(1) and c(10-14). The alpha and beta chains form an alternating ring which encloses part of the gamma chain. F(1) is attached to F(0) by a central stalk formed by the gamma and epsilon chains, while a peripheral stalk is formed by the delta, b and b' chains.

It localises to the cellular thylakoid membrane. Its function is as follows. F(1)F(0) ATP synthase produces ATP from ADP in the presence of a proton or sodium gradient. F-type ATPases consist of two structural domains, F(1) containing the extramembraneous catalytic core and F(0) containing the membrane proton channel, linked together by a central stalk and a peripheral stalk. During catalysis, ATP synthesis in the catalytic domain of F(1) is coupled via a rotary mechanism of the central stalk subunits to proton translocation. Functionally, component of the F(0) channel, it forms part of the peripheral stalk, linking F(1) to F(0). The b'-subunit is a diverged and duplicated form of b found in plants and photosynthetic bacteria. The protein is ATP synthase subunit b' of Microcystis aeruginosa (strain NIES-843 / IAM M-2473).